The following is a 510-amino-acid chain: NAD(P)H-quinone oxidoreductase subunit 2 B, chloroplastic (510 aa).

13 helical membrane-spanning segments follow: residues 24 to 44 (LLLF…GLIL), 57 to 77 (IPWL…ALLF), 99 to 119 (IFQF…VEYI), 124 to 144 (MAIT…MFLC), 149 to 169 (LITI…LSGY), 183 to 203 (YLLM…WLYG), 227 to 247 (PGIS…LSPA), 295 to 315 (WHLL…LIAI), 323 to 343 (MLAY…IVGD), 354 to 374 (YMLF…LFGL), 395 to 415 (ALSL…AGFF), 418 to 438 (LYLF…IGLL), and 484 to 504 (MIVC…IIAI).

This sequence belongs to the complex I subunit 2 family. As to quaternary structure, NDH is composed of at least 16 different subunits, 5 of which are encoded in the nucleus.

The protein resides in the plastid. It is found in the chloroplast thylakoid membrane. It catalyses the reaction a plastoquinone + NADH + (n+1) H(+)(in) = a plastoquinol + NAD(+) + n H(+)(out). It carries out the reaction a plastoquinone + NADPH + (n+1) H(+)(in) = a plastoquinol + NADP(+) + n H(+)(out). NDH shuttles electrons from NAD(P)H:plastoquinone, via FMN and iron-sulfur (Fe-S) centers, to quinones in the photosynthetic chain and possibly in a chloroplast respiratory chain. The immediate electron acceptor for the enzyme in this species is believed to be plastoquinone. Couples the redox reaction to proton translocation, and thus conserves the redox energy in a proton gradient. The protein is NAD(P)H-quinone oxidoreductase subunit 2 B, chloroplastic of Daucus carota (Wild carrot).